A 334-amino-acid polypeptide reads, in one-letter code: Sucrose operon repressor (334 aa).

In terms of domain architecture, HTH lacI-type spans Val-6–Asp-63. The segment at residues Ile-8–Asn-27 is a DNA-binding region (H-T-H motif).

Repressor for the scr operon. Binds D-fructose as an inducer. The sequence is that of Sucrose operon repressor (scrR) from Klebsiella pneumoniae.